The following is a 284-amino-acid chain: Bifunctional protein FolD (284 aa).

NADP(+) contacts are provided by residues 165-167, S190, and I231; that span reads GAS.

Belongs to the tetrahydrofolate dehydrogenase/cyclohydrolase family. As to quaternary structure, homodimer.

It carries out the reaction (6R)-5,10-methylene-5,6,7,8-tetrahydrofolate + NADP(+) = (6R)-5,10-methenyltetrahydrofolate + NADPH. It catalyses the reaction (6R)-5,10-methenyltetrahydrofolate + H2O = (6R)-10-formyltetrahydrofolate + H(+). It functions in the pathway one-carbon metabolism; tetrahydrofolate interconversion. Its function is as follows. Catalyzes the oxidation of 5,10-methylenetetrahydrofolate to 5,10-methenyltetrahydrofolate and then the hydrolysis of 5,10-methenyltetrahydrofolate to 10-formyltetrahydrofolate. The chain is Bifunctional protein FolD from Polynucleobacter asymbioticus (strain DSM 18221 / CIP 109841 / QLW-P1DMWA-1) (Polynucleobacter necessarius subsp. asymbioticus).